The following is a 280-amino-acid chain: F-box only protein 27 (280 aa).

The disordered stretch occupies residues 1–26; the sequence is MGAWASRGRAARVPAPEPESEPEEAL. The F-box domain maps to 25-72; the sequence is ALDLSQLPPELLLVVLSHVPPRTLLGRCRQVCRGWRALVDGQALWLLI. Residues 100-277 form the FBA domain; that stretch reads PCPLGRFCAR…VTNSSVIVRV (178 aa).

As to quaternary structure, part of a SCF (SKP1-cullin-F-box) protein ligase complex. Interacts with SKP1 and CUL1.

Its function is as follows. Substrate-recognition component of the SCF (SKP1-CUL1-F-box protein)-type E3 ubiquitin ligase complex. Able to recognize and bind complex-type oligosaccharides. The polypeptide is F-box only protein 27 (FBXO27) (Macaca fascicularis (Crab-eating macaque)).